We begin with the raw amino-acid sequence, 780 residues long: Striatin (780 aa).

The stretch at 53–120 (LHFLQHEWAR…QERAKYHKLK (68 aa)) forms a coiled coil. Residues 55-63 (FLQHEWARF) form a caveolin-binding region. The tract at residues 123 to 150 (TELNQGDMKPPSYDSDEGNETEVQPQQN) is disordered. S137 is subject to Phosphoserine. The calmodulin-binding stretch occupies residues 149 to 166 (QNSQLMWKQGRQLLRQYL). The residue at position 225 (T225) is a Phosphothreonine. 4 positions are modified to phosphoserine: S227, S229, S245, and S259. Disordered regions lie at residues 289–312 (DFLV…DWEK), 334–353 (EQYK…NRSK), and 364–392 (VDEL…ELSR). The span at 299–312 (NESRSAGDGTDWEK) shows a compositional bias: basic and acidic residues. Basic residues predominate over residues 338–351 (KERKGKKGVKRPNR). WD repeat units lie at residues 461–500 (SHFD…PAKK), 514–553 (AHKG…VDPY), 567–606 (GHTD…PALS), 662–701 (SSSC…LIHS), 704–743 (AHLE…CIQE), and 750–780 (KFEE…KVFV).

The protein belongs to the WD repeat striatin family. Part of the core of STRIPAK complexes composed of PP2A catalytic and scaffolding subunits, the striatins (PP2A regulatory subunits), the striatin-associated proteins MOB4, STRIP1 and STRIP2, PDCD10 and members of the STE20 kinases, such as STK24 and STK26. Interacts with CTTNBP2; this interaction may regulate dendritic spine distribution of STRN. Activation of glutamate receptors weakens the interaction with CTTNBP2. In terms of tissue distribution, mainly expressed in brain but is also expressed at low levels in various tissues such as kidney, spleen, skeletal muscle and lung.

It localises to the cytoplasm. Its subcellular location is the membrane. The protein resides in the cell projection. The protein localises to the dendritic spine. In terms of biological role, calmodulin-binding scaffolding protein which is the center of the striatin-interacting phosphatase and kinase (STRIPAK) complexes. STRIPAK complexes have critical roles in protein (de)phosphorylation and are regulators of multiple signaling pathways including Hippo, MAPK, nuclear receptor and cytoskeleton remodeling. Different types of STRIPAK complexes are involved in a variety of biological processes such as cell growth, differentiation, apoptosis, metabolism and immune regulation. The sequence is that of Striatin (Strn) from Mus musculus (Mouse).